A 403-amino-acid chain; its full sequence is MEKKGQHGTYESMMTHHPILCIIALSVLFIAIDPFHMSPIGGREFKPVKHEVAPYKEVMGSWPRDNLSRLGNHGKLEFVDQVFGPESLEFDSLGRGPYTGLADGRVVRWMGEAIGWETFSVVTSKWSEEACVRGVDSTTNKQWKHEKLCGRPLGLRFHKETGNLYIADAYYGLLVVGPEGGIATPLATHVEGKPILFANDLDIHRNGSIFFTDTSKRYDRANHFFILLEGESTGRLLRYDPPTKTTHIVLEGLAFPNGIQLSKDQSFLLFTETTNCRLVKYWLEGPKMGEVEVVADLPGFPDNVRINEEGQFWVAIDCCRTPAQEVLTNNPWIRSIYFRLPIPMKLLAKTMGMRMYTVISRFDEEGKVLEVLEDRQGKVMKLWIGTVAHNHIATLPYPLTMNQ.

The signal sequence occupies residues 1–42 (MEKKGQHGTYESMMTHHPILCIIALSVLFIAIDPFHMSPIGG). Residues Asn66 and Asn206 are each glycosylated (N-linked (GlcNAc...) asparagine).

It belongs to the strictosidine synthase family.

Its subcellular location is the vacuole. Its function is as follows. Required for the exine formation during pollen development. The sequence is that of Protein STRICTOSIDINE SYNTHASE-LIKE 13 from Arabidopsis thaliana (Mouse-ear cress).